The primary structure comprises 380 residues: Putative 8-amino-7-oxononanoate synthase (380 aa).

Residue R18 participates in substrate binding. Residue 106 to 107 (GY) coordinates pyridoxal 5'-phosphate. H131 is a substrate binding site. Residues S179, 205–208 (DEAH), and 236–239 (TFGK) contribute to the pyridoxal 5'-phosphate site. An N6-(pyridoxal phosphate)lysine modification is found at K239. Residue T352 participates in substrate binding.

This sequence belongs to the class-II pyridoxal-phosphate-dependent aminotransferase family. BioF subfamily. In terms of assembly, homodimer. Requires pyridoxal 5'-phosphate as cofactor.

It carries out the reaction 6-carboxyhexanoyl-[ACP] + L-alanine + H(+) = (8S)-8-amino-7-oxononanoate + holo-[ACP] + CO2. It participates in cofactor biosynthesis; biotin biosynthesis. Its function is as follows. Catalyzes the decarboxylative condensation of pimeloyl-[acyl-carrier protein] and L-alanine to produce 8-amino-7-oxononanoate (AON), [acyl-carrier protein], and carbon dioxide. The polypeptide is Putative 8-amino-7-oxononanoate synthase (bioF) (Neisseria meningitidis serogroup C (strain 053442)).